A 116-amino-acid chain; its full sequence is Large ribosomal subunit protein bL20 (116 aa).

It belongs to the bacterial ribosomal protein bL20 family.

Its function is as follows. Binds directly to 23S ribosomal RNA and is necessary for the in vitro assembly process of the 50S ribosomal subunit. It is not involved in the protein synthesizing functions of that subunit. This chain is Large ribosomal subunit protein bL20, found in Helicobacter pylori (strain P12).